A 287-amino-acid chain; its full sequence is Large ribosomal subunit protein uL2 (287 aa).

The disordered stretch occupies residues 214-287 (LGRRPEVRGS…SKRGRGGRDA (74 aa)). Over residues 271 to 287 (QRRRRKSSKRGRGGRDA) the composition is skewed to basic residues.

This sequence belongs to the universal ribosomal protein uL2 family. As to quaternary structure, part of the 50S ribosomal subunit. Forms a bridge to the 30S subunit in the 70S ribosome.

One of the primary rRNA binding proteins. Required for association of the 30S and 50S subunits to form the 70S ribosome, for tRNA binding and peptide bond formation. It has been suggested to have peptidyltransferase activity; this is somewhat controversial. Makes several contacts with the 16S rRNA in the 70S ribosome. The sequence is that of Large ribosomal subunit protein uL2 from Synechococcus elongatus (strain ATCC 33912 / PCC 7942 / FACHB-805) (Anacystis nidulans R2).